The primary structure comprises 540 residues: Membrane protein insertase YidC (540 aa).

The chain crosses the membrane as a helical span at residues 6–26; the sequence is NILLIALALVSFLLFQQWQVA. The segment at 36–63 is disordered; sequence QAQSSSTLPAPSFADELDPVPGQQQASA. The next 4 membrane-spanning stretches (helical) occupy residues 342–362, 417–437, 455–475, and 496–516; these read AFIQSFVGNWGVAIICLTFIV, LGGCLPLILQMPIFIALYWAL, LSAQDPYYILPLLMGASMFLI, and PVMFTFFFLFFPSGLVLYWLV.

The protein belongs to the OXA1/ALB3/YidC family. Type 1 subfamily. Interacts with the Sec translocase complex via SecD. Specifically interacts with transmembrane segments of nascent integral membrane proteins during membrane integration.

The protein localises to the cell inner membrane. Its function is as follows. Required for the insertion and/or proper folding and/or complex formation of integral membrane proteins into the membrane. Involved in integration of membrane proteins that insert both dependently and independently of the Sec translocase complex, as well as at least some lipoproteins. Aids folding of multispanning membrane proteins. The polypeptide is Membrane protein insertase YidC (Vibrio campbellii (strain ATCC BAA-1116)).